A 274-amino-acid polypeptide reads, in one-letter code: Nuclease (274 aa).

The signal sequence occupies residues 1–24 (MGICGKLGVAALVALIVGCSPVQS). Residue H124 is the Proton acceptor of the active site. N155, D246, E249, D255, F256, Q265, and E269 together coordinate Mn(2+).

It belongs to the DNA/RNA non-specific endonuclease family. Monomer. It depends on Mn(2+) as a cofactor. Mg(2+) is required as a cofactor. The cofactor is Ca(2+). Co(2+) serves as cofactor. In terms of processing, the N-terminus is blocked.

It localises to the periplasm. In terms of biological role, catalyzes the degradation of both RNA and DNA; has the potential to act as an endonuclease. The chain is Nuclease (nucA) from Nostoc sp. (strain PCC 7120 / SAG 25.82 / UTEX 2576).